Reading from the N-terminus, the 464-residue chain is ATP synthase subunit beta 1 (464 aa).

Residue 153–160 (GGAGVGKT) coordinates ATP.

It belongs to the ATPase alpha/beta chains family. As to quaternary structure, F-type ATPases have 2 components, CF(1) - the catalytic core - and CF(0) - the membrane proton channel. CF(1) has five subunits: alpha(3), beta(3), gamma(1), delta(1), epsilon(1). CF(0) has three main subunits: a(1), b(2) and c(9-12). The alpha and beta chains form an alternating ring which encloses part of the gamma chain. CF(1) is attached to CF(0) by a central stalk formed by the gamma and epsilon chains, while a peripheral stalk is formed by the delta and b chains.

The protein resides in the cell inner membrane. The enzyme catalyses ATP + H2O + 4 H(+)(in) = ADP + phosphate + 5 H(+)(out). Functionally, produces ATP from ADP in the presence of a proton gradient across the membrane. The catalytic sites are hosted primarily by the beta subunits. The polypeptide is ATP synthase subunit beta 1 (Burkholderia mallei (strain SAVP1)).